Consider the following 130-residue polypeptide: 3-aminoacrylate deaminase RutC (130 aa).

The protein belongs to the RutC family.

It carries out the reaction (Z)-3-aminoacrylate + H2O + H(+) = 3-oxopropanoate + NH4(+). Its function is as follows. Involved in pyrimidine catabolism. Catalyzes the deamination of 3-aminoacrylate to malonic semialdehyde, a reaction that can also occur spontaneously. RutC may facilitate the reaction and modulate the metabolic fitness, rather than catalyzing essential functions. The polypeptide is 3-aminoacrylate deaminase RutC (Haliangium ochraceum (strain DSM 14365 / JCM 11303 / SMP-2)).